Reading from the N-terminus, the 379-residue chain is Class V chitinase CHIT5b (379 aa).

An N-terminal signal peptide occupies residues 1–26 (MANILNLKHLLTLALILLALATKSST). In terms of domain architecture, GH18 spans 34–379 (RVKGIYWLEN…TQASKAWKLV (346 aa)). N-linked (GlcNAc...) asparagine glycosylation is found at N68, N109, and N128. The Proton donor role is filled by E147. N-linked (GlcNAc...) asparagine glycosylation is found at N192, N227, and N241.

This sequence belongs to the glycosyl hydrolase 18 family. Chitinase class V subfamily.

The catalysed reaction is Random endo-hydrolysis of N-acetyl-beta-D-glucosaminide (1-&gt;4)-beta-linkages in chitin and chitodextrins.. It functions in the pathway glycan degradation; chitin degradation. Possesses chitinase activity in vitro toward glycol chitin, carboxymethyl-chitin, colloidal chitin, and the chitin oligosaccharides (N-acetylglucosamine) (GlcNAc)6 and (GlcNAc)5. Hydrolyzes (GlcNAc)6 into (GlcNAc)4 and (GlcNAc)2, or two (GlcNAc)3 molecules. Has the capacity to reduce hyphal growth of the fungus Trichoderma viride in an agar-plate bioassay. In Medicago truncatula (Barrel medic), this protein is Class V chitinase CHIT5b.